The chain runs to 86 residues: Large ribosomal subunit protein bL27 (86 aa).

Belongs to the bacterial ribosomal protein bL27 family.

The chain is Large ribosomal subunit protein bL27 from Xanthomonas campestris pv. campestris (strain 8004).